Reading from the N-terminus, the 201-residue chain is Guanylate kinase (201 aa).

The Guanylate kinase-like domain occupies glycine 7 to asparagine 186. Serine 14–threonine 21 serves as a coordination point for ATP.

This sequence belongs to the guanylate kinase family.

The protein localises to the cytoplasm. The catalysed reaction is GMP + ATP = GDP + ADP. Its function is as follows. Essential for recycling GMP and indirectly, cGMP. This Wolbachia pipientis wMel protein is Guanylate kinase.